A 646-amino-acid chain; its full sequence is Threonine--tRNA ligase (646 aa).

The 61-residue stretch at Met-1–Thr-61 folds into the TGS domain. Positions Asp-242–Pro-540 are catalytic. Zn(2+)-binding residues include Cys-336, His-387, and His-517.

The protein belongs to the class-II aminoacyl-tRNA synthetase family. As to quaternary structure, homodimer. The cofactor is Zn(2+).

It localises to the cytoplasm. The catalysed reaction is tRNA(Thr) + L-threonine + ATP = L-threonyl-tRNA(Thr) + AMP + diphosphate + H(+). Catalyzes the attachment of threonine to tRNA(Thr) in a two-step reaction: L-threonine is first activated by ATP to form Thr-AMP and then transferred to the acceptor end of tRNA(Thr). Also edits incorrectly charged L-seryl-tRNA(Thr). The protein is Threonine--tRNA ligase of Lactococcus lactis subsp. lactis (strain IL1403) (Streptococcus lactis).